The following is a 311-amino-acid chain: 4-hydroxy-tetrahydrodipicolinate synthase (311 aa).

Residue threonine 51 coordinates pyruvate. Tyrosine 140 acts as the Proton donor/acceptor in catalysis. Residue lysine 168 is the Schiff-base intermediate with substrate of the active site. Residue isoleucine 209 participates in pyruvate binding.

This sequence belongs to the DapA family. In terms of assembly, homotetramer; dimer of dimers.

It localises to the cytoplasm. It carries out the reaction L-aspartate 4-semialdehyde + pyruvate = (2S,4S)-4-hydroxy-2,3,4,5-tetrahydrodipicolinate + H2O + H(+). Its pathway is amino-acid biosynthesis; L-lysine biosynthesis via DAP pathway; (S)-tetrahydrodipicolinate from L-aspartate: step 3/4. Its function is as follows. Catalyzes the condensation of (S)-aspartate-beta-semialdehyde [(S)-ASA] and pyruvate to 4-hydroxy-tetrahydrodipicolinate (HTPA). The sequence is that of 4-hydroxy-tetrahydrodipicolinate synthase from Streptococcus pneumoniae (strain 70585).